A 213-amino-acid polypeptide reads, in one-letter code: Golgi to ER traffic protein 1 (213 aa).

The Lumenal portion of the chain corresponds to 1–4; it reads MESW. Residues 5–25 traverse the membrane as a helical segment; the sequence is LLVILAFLVLERLWPLIDSLI. Residues 26–98 lie on the Cytoplasmic side of the membrane; it reads QRFAQANSTK…RTKASLKKVK (73 aa). The stretch at 55–99 forms a coiled coil; it reads AQDQYVKWTKNNRTLEKINKQIEEEKKQLLSQVDRTKASLKKVKL. Residues 99 to 119 traverse the membrane as a helical segment; it reads LVLITVPFTILKFYKGKMPIY. Residues 120–158 lie on the Lumenal side of the membrane; the sequence is DLPKGLFPNYLQGLFQHGWVYLALGPLNIKKVGDGTHVT. Residues 159-175 form a helical membrane-spanning segment; it reads VSLAIWLFALLKVVSTL. Residues 176 to 213 are Cytoplasmic-facing; it reads GNIWESLTAPAIPAPTITTDPIDQTNESEKPPVDQPVD. A disordered region spans residues 193 to 213; sequence TTDPIDQTNESEKPPVDQPVD.

This sequence belongs to the WRB/GET1 family. As to quaternary structure, component of the Golgi to ER traffic (GET) complex, which is composed of GET1, GET2 and GET3. Within the complex, GET1 and GET2 form a heterotetramer which is stabilized by phosphatidylinositol binding and which binds to the GET3 homodimer.

The protein resides in the endoplasmic reticulum membrane. It localises to the golgi apparatus membrane. Functionally, required for the post-translational delivery of tail-anchored (TA) proteins to the endoplasmic reticulum. Together with GET2, acts as a membrane receptor for soluble GET3, which recognizes and selectively binds the transmembrane domain of TA proteins in the cytosol. The GET complex cooperates with the HDEL receptor ERD2 to mediate the ATP-dependent retrieval of resident ER proteins that contain a C-terminal H-D-E-L retention signal from the Golgi to the ER. The sequence is that of Golgi to ER traffic protein 1 from Kluyveromyces lactis (strain ATCC 8585 / CBS 2359 / DSM 70799 / NBRC 1267 / NRRL Y-1140 / WM37) (Yeast).